A 453-amino-acid chain; its full sequence is tRNA hydroxylation protein P (453 aa).

Belongs to the peptidase U32 family.

In terms of biological role, involved in prephenate-dependent formation of 5-hydroxyuridine (ho5U) modification at position 34 in tRNAs, the first step in 5-carboxymethoxyuridine (cmo5U) biosynthesis. Involved differently in ho5U formation in each tRNA; tRNA(Leu3) and tRNA(Pro3) are major targets of TrhP. This chain is tRNA hydroxylation protein P, found in Escherichia coli (strain K12).